We begin with the raw amino-acid sequence, 196 residues long: MENHKSNNTKENITIVDISRKINQLPEAERNLLEHGSVYVGLNAALCGLIANSLFRRILNVTKARIAAGLPMAWIPFLTTDITYRCFVSFPLNTGDLDCETCTITRSGLIGLVIGGLYPVFLAIPVNGGLAARYQSALLPHKGNILSYWIRTSKPVFRKMLFPIMLQTMFSAYLGSEQYKLLIKALQLSEPGKEIH.

The Mitochondrial matrix portion of the chain corresponds to 1–34 (MENHKSNNTKENITIVDISRKINQLPEAERNLLE). A helical membrane pass occupies residues 35–55 (HGSVYVGLNAALCGLIANSLF). Residues 56-57 (RR) are Mitochondrial intermembrane-facing. A helical membrane pass occupies residues 58-78 (ILNVTKARIAAGLPMAWIPFL). The Mitochondrial matrix segment spans residues 79–107 (TTDITYRCFVSFPLNTGDLDCETCTITRS). A helical transmembrane segment spans residues 108 to 128 (GLIGLVIGGLYPVFLAIPVNG). Over 129 to 159 (GLAARYQSALLPHKGNILSYWIRTSKPVFRK) the chain is Mitochondrial intermembrane. The helical transmembrane segment at 160 to 176 (MLFPIMLQTMFSAYLGS) threads the bilayer. Over 177–196 (EQYKLLIKALQLSEPGKEIH) the chain is Mitochondrial matrix.

It belongs to the TMEM126 family. As to quaternary structure, interacts with OXA1L; promoting cotranslational quality control in mitochondria.

The protein localises to the mitochondrion inner membrane. Its function is as follows. Protein required for the cotranslational protein quality control in the inner membrane of the mitochondria. Associates with newly synthesized polypeptides and may act as a chaperone that cooperates with OXA1L for the insertion of newly synthesized mitochondrial proteins into the inner membrane. Required for the assembly of the ND4 module of mitochondrial complex I. The sequence is that of Transmembrane protein 126A (TMEM126A) from Pongo abelii (Sumatran orangutan).